The sequence spans 345 residues: Anthranilate phosphoribosyltransferase (345 aa).

5-phospho-alpha-D-ribose 1-diphosphate is bound by residues glycine 79, 82-83 (GD), threonine 87, 89-92 (NVST), 106-114 (KHGNRAVSG), and serine 118. Glycine 79 serves as a coordination point for anthranilate. Residue serine 91 participates in Mg(2+) binding. Position 109 (asparagine 109) interacts with anthranilate. Arginine 164 is a binding site for anthranilate. Mg(2+)-binding residues include aspartate 223 and glutamate 224.

The protein belongs to the anthranilate phosphoribosyltransferase family. In terms of assembly, homodimer. Mg(2+) is required as a cofactor.

It catalyses the reaction N-(5-phospho-beta-D-ribosyl)anthranilate + diphosphate = 5-phospho-alpha-D-ribose 1-diphosphate + anthranilate. The protein operates within amino-acid biosynthesis; L-tryptophan biosynthesis; L-tryptophan from chorismate: step 2/5. In terms of biological role, catalyzes the transfer of the phosphoribosyl group of 5-phosphorylribose-1-pyrophosphate (PRPP) to anthranilate to yield N-(5'-phosphoribosyl)-anthranilate (PRA). This chain is Anthranilate phosphoribosyltransferase, found in Saccharolobus islandicus (strain M.14.25 / Kamchatka #1) (Sulfolobus islandicus).